The chain runs to 77 residues: Protein NS4 (77 aa).

The protein localises to the host cytoplasm. The protein resides in the host nucleus. It localises to the host nucleolus. May function as a nucleic acid binding protein that modulates transcription of genes participating in the IFN response. The polypeptide is Protein NS4 (Segment-9) (Antilocapra americana (Pronghorn)).